A 72-amino-acid chain; its full sequence is Guanine nucleotide-binding protein subunit gamma (72 aa).

The interval 32–72 (MVSVAPPKANPSVSSKTKQQQHFKPGKATKDKATTKCCTIS) is disordered. The S-palmitoyl cysteine moiety is linked to residue Cys68. Cys69 bears the Cysteine methyl ester mark. Residue Cys69 is the site of S-farnesyl cysteine attachment. Residues 70–72 (TIS) constitute a propeptide, removed in mature form.

Belongs to the G protein gamma family. As to quaternary structure, g proteins are composed of 3 units, alpha, beta and gamma. Binding of the beta-gamma subunit complex (git5-git11) to the alpha subunit (gpa2) facilitates interaction with GPCR git3.

The protein resides in the cell membrane. Functionally, gamma subunit of the heterotrimeric guanine nucleotide-binding protein (G protein) involved in glucose-induced cAMP signaling. The beta-gamma subunits (git5-git11) promote binding of the alpha subunit gpa2 to GPCR git3, which senses extracellular glucose, to activate cAMP-PKA signaling and repress sexual development and gluconeogenesis. In Schizosaccharomyces pombe (strain 972 / ATCC 24843) (Fission yeast), this protein is Guanine nucleotide-binding protein subunit gamma (git11).